Consider the following 271-residue polypeptide: Protein FAM110D (271 aa).

3 disordered regions span residues 1 to 83 (MLLA…RPDS), 116 to 145 (PRDA…APEA), and 186 to 245 (PQSW…PVSV). The segment covering 68-78 (RPVRRGSGRRL) has biased composition (basic residues). Residues 116–126 (PRDAAPSSPAS) show a composition bias toward low complexity. A compositionally biased stretch (gly residues) spans 220-231 (SPGGAGGGGGSE).

It belongs to the FAM110 family.

This Homo sapiens (Human) protein is Protein FAM110D (FAM110D).